An 891-amino-acid polypeptide reads, in one-letter code: Metabotropic glutamate receptor-like protein N (891 aa).

Residues 1–399 (MKLYTHKINR…FKPISKTIEY (399 aa)) are Extracellular-facing. N52, N85, N88, N125, N132, N224, N298, N312, N320, N325, N353, N363, and N375 each carry an N-linked (GlcNAc...) asparagine glycan. The disordered stretch occupies residues 52–91 (NNSNSNSNNNNNNNNNNNNNNNNNNNNNNNNNNNNSNNSN). A helical transmembrane segment spans residues 400–420 (GITIVSSILIGALIIIQICII). Over 421 to 433 (KYKNKPSFKSASP) the chain is Cytoplasmic. A helical membrane pass occupies residues 434 to 454 (TFLIFIVIGGIFVYIGVIIWV). Over 455–461 (SGVNVFT) the chain is Extracellular. Residues 462–482 (CNAKFWLISLGLTTMIGGIVV) form a helical membrane-spanning segment. The Cytoplasmic segment spans residues 483 to 505 (KNFRIWLIFDNPKLYHIKITNLQ). The helical transmembrane segment at 506–526 (LLPWVLGMFLLNVFLLSLITG) threads the bilayer. Residues 527-555 (LGKLTPFKVFPNDEKFSSYEIQCEMMDGG) are Extracellular-facing. The helical transmembrane segment at 556–576 (LIALYFLLGYFAIIVMIGIFV) threads the bilayer. At 577-592 (SWKIRIVDIEEFNESK) the chain is on the cytoplasmic side. A helical membrane pass occupies residues 593–613 (SVAYSLYSIVFCLLIIAPLTI). Over 614-625 (SKTGHNTEILCS) the chain is Extracellular. The helical transmembrane segment at 626–646 (GFIFIVAAIITIMFIPKFWAL) threads the bilayer. The Cytoplasmic segment spans residues 647–891 (KIYGAEGSNE…SDSNSDSIIQ (245 aa)). Disordered stretches follow at residues 660 to 689 (QSSS…KKSS), 742 to 827 (NEMT…ILTP), and 869 to 891 (DEVI…SIIQ). Residues 742–767 (NEMTYNDDPTYTEPSEQPTYTESSEQ) are compositionally biased toward polar residues. Positions 772–782 (PRTLTATPRTN) are enriched in low complexity. Residues 783 to 820 (DLTTPRTNDLTTPRTNDLITPRTNDLSTPRTNDLNTPR) show a composition bias toward polar residues. A compositionally biased stretch (acidic residues) spans 872–881 (IENSDSESES). The span at 882-891 (SDSNSDSIIQ) shows a compositional bias: low complexity.

Belongs to the G-protein coupled receptor 3 family. GABA-B receptor subfamily.

It localises to the membrane. The chain is Metabotropic glutamate receptor-like protein N (grlN) from Dictyostelium discoideum (Social amoeba).